The chain runs to 329 residues: 4-hydroxythreonine-4-phosphate dehydrogenase (329 aa).

Substrate is bound by residues H136 and T137. A divalent metal cation is bound by residues H166, H211, and H266. Substrate contacts are provided by K274, N283, and R292.

It belongs to the PdxA family. As to quaternary structure, homodimer. Zn(2+) is required as a cofactor. Requires Mg(2+) as cofactor. Co(2+) serves as cofactor.

It is found in the cytoplasm. The catalysed reaction is 4-(phosphooxy)-L-threonine + NAD(+) = 3-amino-2-oxopropyl phosphate + CO2 + NADH. The protein operates within cofactor biosynthesis; pyridoxine 5'-phosphate biosynthesis; pyridoxine 5'-phosphate from D-erythrose 4-phosphate: step 4/5. In terms of biological role, catalyzes the NAD(P)-dependent oxidation of 4-(phosphooxy)-L-threonine (HTP) into 2-amino-3-oxo-4-(phosphooxy)butyric acid which spontaneously decarboxylates to form 3-amino-2-oxopropyl phosphate (AHAP). In Shigella dysenteriae serotype 1 (strain Sd197), this protein is 4-hydroxythreonine-4-phosphate dehydrogenase.